The primary structure comprises 209 residues: Isopentenyl-diphosphate Delta-isomerase (209 aa).

Residues H31 and H38 each contribute to the Mn(2+) site. The Nudix hydrolase domain occupies P36–A171. C73 is an active-site residue. C73 lines the Mg(2+) pocket. Position 75 (H75) interacts with Mn(2+). E93 serves as a coordination point for Mg(2+). The Mn(2+) site is built by E120 and E122. E122 is a catalytic residue.

The protein belongs to the IPP isomerase type 1 family. It depends on Mg(2+) as a cofactor. Requires Mn(2+) as cofactor.

The protein resides in the cytoplasm. It catalyses the reaction isopentenyl diphosphate = dimethylallyl diphosphate. Its pathway is isoprenoid biosynthesis; dimethylallyl diphosphate biosynthesis; dimethylallyl diphosphate from isopentenyl diphosphate: step 1/1. Catalyzes the 1,3-allylic rearrangement of the homoallylic substrate isopentenyl (IPP) to its highly electrophilic allylic isomer, dimethylallyl diphosphate (DMAPP). This Rhizobium rhizogenes (Agrobacterium rhizogenes) protein is Isopentenyl-diphosphate Delta-isomerase.